The chain runs to 799 residues: MPERLAETLMDLWTPLIILWITLPSCVYTAPMNQAHVLTTGSPLELSRQSEDMRILSRSKRGWVWNQMFVLEEFSGPEPILVGRLHTDLDPGSKKIKYILSGDGAGTIFQINDITGDIHAIKRLDREEKAEYTLTAQAVDFETNKPLEPPSEFIIKVQDINDNAPEFLNGPYHATVPEMSILGTSVTNVTATDADDPVYGNSAKLVYSILEGQPYFSIEPETAIIKTALPNMDREAKEEYLVVIQAKDMGGHSGGLSGTTTLTVTLTDVNDNPPKFAQSLYHFSVPEDVVLGTAIGRVKANDQDIGENAQSSYDIIDGDGTALFEITSDAQAQDGVIRLRKPLDFETKKSYTLKVEAANIHIDPRFSSRGPFKDTATVKIVVEDADEPPVFSSPTYLLEVHENAALNSVIGQVTARDPDITSSPIRFSIDRHTDLERQFNINADDGKITLATPLDRELSVWHNITIIATEIRNHSQISRVPVAIKVLDVNDNAPEFASEYEAFLCENGKPGQVIQTVSAMDKDDPKNGHFFLYSLLPEMVNNPNFTIKKNEDNSLSILAKHNGFNRQKQEVYLLPIVISDSGNPPLSSTSTLTIRVCGCSNDGVVQSCNVEAYVLPIGLSMGALIAILACIILLLVIVVLFVTLRRHKNEPLIIKDDEDVRENIIRYDDEGGGEEDTEAFDIATLQNPDGINGFLPRKDIKPDLQFMPRQGLAPVPNGVDVDEFINVRLHEADNDPTAPPYDSIQIYGYEGRGSVAGSLSSLESTTSDSDQNFDYLSDWGPRFKRLGELYSVGESDKET.

Residues 1-29 (MPERLAETLMDLWTPLIILWITLPSCVYT) form the signal peptide. A propeptide spanning residues 30 to 61 (APMNQAHVLTTGSPLELSRQSEDMRILSRSKR) is cleaved from the precursor. Cadherin domains are found at residues 62–167 (GWVW…APEF), 168–276 (LNGP…PPKF), 277–391 (AQSL…PPVF), 392–494 (SSPT…DNAP), and 495–616 (EFAS…YVLP). Residues 62 to 621 (GWVWNQMFVL…AYVLPIGLSM (560 aa)) are Extracellular-facing. Residue N188 is glycosylated (N-linked (GlcNAc...) asparagine). N463, N473, and N544 each carry an N-linked (GlcNAc...) asparagine glycan. A helical membrane pass occupies residues 622-642 (GALIAILACIILLLVIVVLFV). Topologically, residues 643–799 (TLRRHKNEPL…YSVGESDKET (157 aa)) are cytoplasmic. S795 bears the Phosphoserine mark.

Its subcellular location is the cell membrane. Its function is as follows. Cadherins are calcium-dependent cell adhesion proteins. They preferentially interact with themselves in a homophilic manner in connecting cells; cadherins may thus contribute to the sorting of heterogeneous cell types. This Mus musculus (Mouse) protein is Cadherin-8 (Cdh8).